A 179-amino-acid chain; its full sequence is Transmembrane protein 196 (179 aa).

The next 4 membrane-spanning stretches (helical) occupy residues 11–31 (LLVL…VGAV), 44–61 (LGDS…ILCA), 67–87 (LVMI…ILNF), and 100–120 (LYPL…GCTL).

It localises to the cytoplasm. Its subcellular location is the membrane. Acts as a tumor suppressor in lung cancer. Inhibits tumor cell growth by inhibiting cell proliferation and migration and promoting cell apoptosis. Inhibits metastasis of lung cancer by suppressing beta-catenin expression in the Wnt/beta-catenin signaling pathway. This Pongo abelii (Sumatran orangutan) protein is Transmembrane protein 196 (TMEM196).